A 149-amino-acid polypeptide reads, in one-letter code: NADH-quinone oxidoreductase subunit I 1 (149 aa).

4Fe-4S ferredoxin-type domains are found at residues 51 to 82 (LKSF…VQGT) and 93 to 122 (THYV…YSTE). Residues C62, C65, C68, C72, C102, C105, C108, and C112 each coordinate [4Fe-4S] cluster.

Belongs to the complex I 23 kDa subunit family. NDH-1 is composed of 14 different subunits. Subunits NuoA, H, J, K, L, M, N constitute the membrane sector of the complex. It depends on [4Fe-4S] cluster as a cofactor.

The protein resides in the cell inner membrane. The catalysed reaction is a quinone + NADH + 5 H(+)(in) = a quinol + NAD(+) + 4 H(+)(out). NDH-1 shuttles electrons from NADH, via FMN and iron-sulfur (Fe-S) centers, to quinones in the respiratory chain. The immediate electron acceptor for the enzyme in this species is believed to be ubiquinone. Couples the redox reaction to proton translocation (for every two electrons transferred, four hydrogen ions are translocated across the cytoplasmic membrane), and thus conserves the redox energy in a proton gradient. The polypeptide is NADH-quinone oxidoreductase subunit I 1 (Syntrophobacter fumaroxidans (strain DSM 10017 / MPOB)).